The following is a 415-amino-acid chain: Phosphoribosylamine--glycine ligase (415 aa).

An ATP-grasp domain is found at 108–311; the sequence is KKIMEKYNIP…LMQHIIDLDE (204 aa). Residue 134–191 participates in ATP binding; it reads IENCEFPVVVKKDGLAAGKGVIIADTIEAARSAIEIMYGDEEEGTVVFETFLEGEEFS. The Mg(2+) site is built by Glu281 and Asn283.

The protein belongs to the GARS family. The cofactor is Mg(2+). Mn(2+) serves as cofactor.

The enzyme catalyses 5-phospho-beta-D-ribosylamine + glycine + ATP = N(1)-(5-phospho-beta-D-ribosyl)glycinamide + ADP + phosphate + H(+). It participates in purine metabolism; IMP biosynthesis via de novo pathway; N(1)-(5-phospho-D-ribosyl)glycinamide from 5-phospho-alpha-D-ribose 1-diphosphate: step 2/2. The protein is Phosphoribosylamine--glycine ligase of Staphylococcus aureus (strain MRSA252).